The following is a 226-amino-acid chain: Large ribosomal subunit protein uL3 (226 aa).

The protein belongs to the universal ribosomal protein uL3 family. Part of the 50S ribosomal subunit. Forms a cluster with proteins L14 and L19.

One of the primary rRNA binding proteins, it binds directly near the 3'-end of the 23S rRNA, where it nucleates assembly of the 50S subunit. The chain is Large ribosomal subunit protein uL3 from Sulfurihydrogenibium sp. (strain YO3AOP1).